We begin with the raw amino-acid sequence, 251 residues long: Hydroxyacylglutathione hydrolase (251 aa).

The Zn(2+) site is built by His-53, His-55, Asp-57, His-58, His-110, Asp-127, and His-165.

Belongs to the metallo-beta-lactamase superfamily. Glyoxalase II family. Monomer. Zn(2+) is required as a cofactor.

It carries out the reaction an S-(2-hydroxyacyl)glutathione + H2O = a 2-hydroxy carboxylate + glutathione + H(+). It functions in the pathway secondary metabolite metabolism; methylglyoxal degradation; (R)-lactate from methylglyoxal: step 2/2. Its function is as follows. Thiolesterase that catalyzes the hydrolysis of S-D-lactoyl-glutathione to form glutathione and D-lactic acid. The protein is Hydroxyacylglutathione hydrolase of Salmonella arizonae (strain ATCC BAA-731 / CDC346-86 / RSK2980).